The chain runs to 357 residues: MFAKLENLELKFEDLEQQLSSAEVFNDQDRYRKLTKAHADLKQVVDAFRRYKEMKQNLADNKELLGDSDHEIRAMAHEEIKAIEAALPDIEQELKILLLPRDPMDDKNILLEIRAGTGGEEASLFAADLFRMYTRYAEIMGWKVEVLSASDSDTGGYKEIIALIAGDKVYSRLKYESGTHRVQRVPATEAQGRIHTSAATVAVMPEAEEVDVDIRPDDLRIDVYRASGAGGQHVNKTESAVRITHLPTGIVVACQDEKSQHKNKAKAMKVLISRVLQAEQERAHSVIADARRALVGSGDRSERIRTYNYPQSRITDHRINLTLYSLDKVMEGELAPLVDALVTHAQTEALKAQADAS.

At Q232 the chain carries N5-methylglutamine.

Belongs to the prokaryotic/mitochondrial release factor family. Methylated by PrmC. Methylation increases the termination efficiency of RF1.

Its subcellular location is the cytoplasm. Peptide chain release factor 1 directs the termination of translation in response to the peptide chain termination codons UAG and UAA. This is Peptide chain release factor 1 from Nitratidesulfovibrio vulgaris (strain ATCC 29579 / DSM 644 / CCUG 34227 / NCIMB 8303 / VKM B-1760 / Hildenborough) (Desulfovibrio vulgaris).